The following is a 152-amino-acid chain: MASVDTYKKNWKQFFNDHDLDDNIQQQLYNIINNMRLEDFRIIITNHNTVDDEIGPRPYSEFTIGDVKGELHCCGYFFIKNNTNYIIDYYKFQDQFYESTSFCINDIKELIFTSLFEESNEHMLEINDEENRIEIQDIFKKFFDVILIEKTY.

This is an uncharacterized protein from Acheta domesticus (House cricket).